Here is a 230-residue protein sequence, read N- to C-terminus: Iron-dependent repressor IdeR (230 aa).

One can recognise an HTH dtxR-type domain in the interval 4–65 (LVDTTEMYLR…VAGNRHLELT (62 aa)).

The protein belongs to the DtxR/MntR family. In terms of assembly, homodimer.

Its subcellular location is the cytoplasm. Its function is as follows. Metal-dependent DNA-binding protein that controls transcription of many genes involved in iron metabolism. This Mycobacterium leprae (strain TN) protein is Iron-dependent repressor IdeR (ideR).